We begin with the raw amino-acid sequence, 1534 residues long: Slit homolog 1 protein (1534 aa).

The first 33 residues, 1–33 (MALTPGWGSSAGPVRPELWLLLWAAAWRLGASA), serve as a signal peptide directing secretion. The 28-residue stretch at 34 to 61 (CPALCTCTGTTVDCHGTGLQAIPKNIPR) folds into the LRRNT domain. LRR repeat units lie at residues 62–83 (NTER…DFAG), 86–107 (QLRV…AFDD), 110–131 (ELER…LFQN), 134–155 (ALSR…AFRG), 158–179 (DLKN…AFRA), and 182–203 (GLEV…SFNH). N-linked (GlcNAc...) asparagine glycosylation occurs at Asn-72. Asn-192 carries N-linked (GlcNAc...) asparagine glycosylation. Residues 215–265 (NHLFCDCHLAWLSQWLRQRPTIGLFTQCSGPASLRGLNVAEVQKSEFSCSG) enclose the LRRCT 1 domain. The 37-residue stretch at 273–309 (PTCTLSSGSCPAMCTCSNGIVDCRGKGLTAIPANLPE) folds into the LRRNT 2 domain. A disulfide bond links Cys-286 and Cys-295. 5 LRR repeats span residues 310–331 (TMTE…AFSP), 334–355 (KLRR…AFQG), 358–379 (SLNS…VFGG), 382–403 (TLQL…AFQD), and 406–427 (NLSL…TFTS). Asn-406 is a glycosylation site (N-linked (GlcNAc...) asparagine). Residues 439–489 (NPFICDCNLKWLADFLRTNPIETSGARCASPRRLANKRIGQIKSKKFRCSA) enclose the LRRCT 2 domain. Disulfide bonds link Cys-443-Cys-466, Cys-445-Cys-487, Cys-513-Cys-519, and Cys-517-Cys-526. The 37-residue stretch at 504-540 (NSECNSDVVCPHKCRCEANVVECSSLKLTKIPERIPQ) folds into the LRRNT 3 domain. LRR repeat units lie at residues 541-562 (STAE…GMFK), 566-587 (HLKK…AFEG), 590-611 (SVSE…MFRG), 614-635 (GLRT…SFTG), and 638-659 (NVRL…AFDT). N-linked (GlcNAc...) asparagine glycosylation is present at Asn-571. The N-linked (GlcNAc...) asparagine glycan is linked to Asn-630. The LRRCT 3 domain maps to 671–721 (NPFNCNCQLAWLGGWLRKRKIVTGNPRCQNPDFLRQIPLQDVAFPDFRCEE). 2 cysteine pairs are disulfide-bonded: Cys-675/Cys-698 and Cys-677/Cys-719. Residues 725–761 (EGGCLPRPQCPQECACLDTVVRCSNKHLRALPKGIPK) enclose the LRRNT 4 domain. 3 N-linked (GlcNAc...) asparagine glycosylation sites follow: Asn-762, Asn-801, and Asn-806. 4 LRR repeats span residues 762-783 (NVTE…LSTF), 785-806 (YLQL…SFTN), 809-830 (QLTT…AFQG), and 833-854 (SLRL…IFAD). Residues 866–916 (NPLYCDCHLRWLSSWVKTGYKEPGIARCAGPQDMEGKLLLTTPAKKFECQG) form the LRRCT 4 domain. EGF-like domains are found at residues 927–962 (DLCL…RDCE), 964–1003 (SLDS…PTCG), 1005–1041 (NTDD…KACE), 1043–1081 (LVDL…DNCS), 1083–1119 (NQDD…QLCE), and 1127–1163 (PKSP…PECE). Cystine bridges form between Cys-929-Cys-940, Cys-934-Cys-950, Cys-952-Cys-961, Cys-968-Cys-979, Cys-973-Cys-991, Cys-993-Cys-1002, Cys-1009-Cys-1020, Cys-1014-Cys-1029, Cys-1031-Cys-1040, Cys-1047-Cys-1060, Cys-1054-Cys-1069, Cys-1071-Cys-1080, Cys-1087-Cys-1098, Cys-1092-Cys-1107, Cys-1109-Cys-1118, Cys-1131-Cys-1142, Cys-1136-Cys-1151, and Cys-1153-Cys-1162. N-linked (GlcNAc...) asparagine glycosylation is present at Asn-1026. A glycan (N-linked (GlcNAc...) asparagine) is linked at Asn-1079. Positions 1166 to 1339 (LSVNFVDRDT…QMKPGVVPGC (174 aa)) constitute a Laminin G-like domain. Residues Asn-1189, Asn-1259, and Asn-1306 are each glycosylated (N-linked (GlcNAc...) asparagine). 14 disulfide bridges follow: Cys-1313-Cys-1339, Cys-1342-Cys-1352, Cys-1347-Cys-1362, Cys-1364-Cys-1373, Cys-1381-Cys-1391, Cys-1386-Cys-1401, Cys-1403-Cys-1412, Cys-1422-Cys-1432, Cys-1427-Cys-1442, Cys-1444-Cys-1453, Cys-1459-Cys-1498, Cys-1477-Cys-1512, Cys-1488-Cys-1528, and Cys-1492-Cys-1530. EGF-like domains lie at 1340–1374 (EPCR…LHCD), 1377–1413 (ADGP…ALCN), and 1418–1454 (LAEP…ELCE). The CTCK domain maps to 1459–1534 (CRGDPVRDFH…PTKCGCALCA (76 aa)).

In terms of assembly, interacts with ROBO1 and GREM1. As to expression, predominantly expressed in adult forebrain. Expressed in fetal brain, lung and kidney.

The protein localises to the secreted. In terms of biological role, thought to act as molecular guidance cue in cellular migration, and function appears to be mediated by interaction with roundabout homolog receptors. During neural development involved in axonal navigation at the ventral midline of the neural tube and projection of axons to different regions. SLIT1 and SLIT2 together seem to be essential for midline guidance in the forebrain by acting as repulsive signal preventing inappropriate midline crossing by axons projecting from the olfactory bulb. The chain is Slit homolog 1 protein (SLIT1) from Homo sapiens (Human).